We begin with the raw amino-acid sequence, 236 residues long: Putative N-acetylmannosamine-6-phosphate 2-epimerase (236 aa).

Belongs to the NanE family.

It catalyses the reaction an N-acyl-D-glucosamine 6-phosphate = an N-acyl-D-mannosamine 6-phosphate. The protein operates within amino-sugar metabolism; N-acetylneuraminate degradation; D-fructose 6-phosphate from N-acetylneuraminate: step 3/5. Functionally, converts N-acetylmannosamine-6-phosphate (ManNAc-6-P) to N-acetylglucosamine-6-phosphate (GlcNAc-6-P). In Listeria welshimeri serovar 6b (strain ATCC 35897 / DSM 20650 / CCUG 15529 / CIP 8149 / NCTC 11857 / SLCC 5334 / V8), this protein is Putative N-acetylmannosamine-6-phosphate 2-epimerase.